The following is a 302-amino-acid chain: S-crystallin SL4 (302 aa).

Repeat copies occupy residues 45–54, 55–64, and 65–74. The 4 X approximate tandem repeats of G-G-Y-[AYP]-V-[QK]-[SG]-R-G-D stretch occupies residues 45-84; the sequence is GGYAVQSRGDGGYYVKSRGDGGYPVQGRGDTGYSSQTRSD. 3 consecutive short sequence motifs (cell attachment site) follow at residues 52–54, 62–64, and 72–74; these read RGD. Positions 68–92 are disordered; it reads PVQGRGDTGYSSQTRSDDACLGQGR. Residues 75 to 84 form a 4; approximate repeat; sequence TGYSSQTRSD. The short motif at 113–115 is the Cell attachment site element; that stretch reads RGD. A disordered region spans residues 118–205; the sequence is SDINSGLYSG…ESASRRSRNH (88 aa). 2 stretches are compositionally biased toward basic and acidic residues: residues 129-166 and 177-192; these read RMDDSCHTSESRRMDDPCGTDESRRLDVPCHSDDHYRS and AEDRRGGHSDSHRIDI. Residues 183–302 enclose the GST C-terminal domain; the sequence is GHSDSHRIDI…YIKRRYQSDF (120 aa).

Belongs to the GST superfamily.

Its function is as follows. S-crystallins are structural components of squids and octopi eye lens. The polypeptide is S-crystallin SL4 (Nototodarus sloanii (Wellington flying squid)).